A 424-amino-acid chain; its full sequence is DNA repair protein Rad60 (424 aa).

Position 26 is a phosphotyrosine (Y26). Phosphoserine is present on residues S32 and S34. The interval 45–177 (LPKKSTKTGK…LTTTTSNSAS (133 aa)) is disordered. Positions 48-57 (KSTKTGKRKN) are enriched in basic residues. Residues 77–93 (QAEHKAVEPEEDMRTER) show a composition bias toward basic and acidic residues. S96 is subject to Phosphoserine. The segment covering 104–123 (EMEKKNGQQSDVEKHAKEND) has biased composition (basic and acidic residues). A compositionally biased stretch (basic residues) spans 156–166 (KPKKRGQKKRT). Residues 167-177 (SLTTTTSNSAS) are compositionally biased toward low complexity.

In terms of assembly, forms a complex with dgrn; likely required for localization to the nuclear periphery. Interacts with the SMC5-SMC6 complex members SMC5 and SMC6/jnj following ionizing radiation (IR) to induce DNA damage. Interaction between the SMC5-SMC6 complex and the dgrn-Rad60 complex, may stabilize the association of heterochromatic DSBs with the nuclear periphery.

It localises to the nucleus. The protein localises to the nucleoplasm. In terms of biological role, required for repair of DNA double strand breaks which occur during replication or are induced by ionizing radiation (IR). Functions with dgrn and downstream of the SMC5-SMC6 complex to regulate strand break repair. Likely functions by stabilizing the association of heterochromatic double strand breaks (DSBs) with the nuclear periphery as part of the homologous recombination (HR) repair process. This is DNA repair protein Rad60 from Drosophila melanogaster (Fruit fly).